The chain runs to 123 residues: uncharacterized protein (123 aa).

This sequence to insertion element IS1016 transposase.

This is an uncharacterized protein from Haemophilus influenzae (strain ATCC 51907 / DSM 11121 / KW20 / Rd).